The chain runs to 313 residues: UPF0252 protein AF_0384 (313 aa).

It belongs to the UPF0252 family.

This chain is UPF0252 protein AF_0384, found in Archaeoglobus fulgidus (strain ATCC 49558 / DSM 4304 / JCM 9628 / NBRC 100126 / VC-16).